Here is a 119-residue protein sequence, read N- to C-terminus: Large ribosomal subunit protein uL18 (119 aa).

The protein belongs to the universal ribosomal protein uL18 family. As to quaternary structure, part of the 50S ribosomal subunit; part of the 5S rRNA/L5/L18/L25 subcomplex. Contacts the 5S and 23S rRNAs.

This is one of the proteins that bind and probably mediate the attachment of the 5S RNA into the large ribosomal subunit, where it forms part of the central protuberance. This chain is Large ribosomal subunit protein uL18, found in Xanthomonas oryzae pv. oryzae (strain MAFF 311018).